Reading from the N-terminus, the 350-residue chain is Small ribosomal subunit biogenesis GTPase RsgA (350 aa).

Over residues Met-1 to Asn-17 the composition is skewed to polar residues. Positions Met-1–Glu-27 are disordered. The region spanning Thr-104 to Phe-273 is the CP-type G domain. GTP contacts are provided by residues Asn-160 to Asp-163 and Gly-214 to Ser-222. Positions 297, 302, 304, and 310 each coordinate Zn(2+).

Belongs to the TRAFAC class YlqF/YawG GTPase family. RsgA subfamily. Monomer. Associates with 30S ribosomal subunit, binds 16S rRNA. Zn(2+) is required as a cofactor.

It is found in the cytoplasm. In terms of biological role, one of several proteins that assist in the late maturation steps of the functional core of the 30S ribosomal subunit. Helps release RbfA from mature subunits. May play a role in the assembly of ribosomal proteins into the subunit. Circularly permuted GTPase that catalyzes slow GTP hydrolysis, GTPase activity is stimulated by the 30S ribosomal subunit. In Salmonella typhi, this protein is Small ribosomal subunit biogenesis GTPase RsgA.